The following is a 493-amino-acid chain: Trigger factor (493 aa).

The region spanning 169–254 is the PPIase FKBP-type domain; the sequence is GDRVTMDYLG…VKEVAAPAET (86 aa). Positions 439 to 493 are disordered; that stretch reads ELLAEDEDGDDTKPAKKSAKKKAAKAEDASAEGEEAAPKKKAAAKKKAADEGDAE.

It belongs to the FKBP-type PPIase family. Tig subfamily.

Its subcellular location is the cytoplasm. The catalysed reaction is [protein]-peptidylproline (omega=180) = [protein]-peptidylproline (omega=0). In terms of biological role, involved in protein export. Acts as a chaperone by maintaining the newly synthesized protein in an open conformation. Functions as a peptidyl-prolyl cis-trans isomerase. In Allorhizobium ampelinum (strain ATCC BAA-846 / DSM 112012 / S4) (Agrobacterium vitis (strain S4)), this protein is Trigger factor.